A 545-amino-acid chain; its full sequence is Phenylalanine--tRNA ligase beta subunit (545 aa).

Residues 270-346 (LEPKERLLTT…KGYGYENIKV (77 aa)) form the B5 domain. Mg(2+) is bound by residues Asp-324, Asp-330, Glu-333, and Asp-334.

The protein belongs to the phenylalanyl-tRNA synthetase beta subunit family. Type 2 subfamily. Tetramer of two alpha and two beta subunits. The cofactor is Mg(2+).

Its subcellular location is the cytoplasm. The enzyme catalyses tRNA(Phe) + L-phenylalanine + ATP = L-phenylalanyl-tRNA(Phe) + AMP + diphosphate + H(+). The polypeptide is Phenylalanine--tRNA ligase beta subunit (Methanosarcina acetivorans (strain ATCC 35395 / DSM 2834 / JCM 12185 / C2A)).